The following is a 51-amino-acid chain: Small ribosomal subunit protein uS13 (51 aa).

It belongs to the universal ribosomal protein uS13 family. As to quaternary structure, part of the 30S ribosomal subunit. Forms a loose heterodimer with protein S19. Forms two bridges to the 50S subunit in the 70S ribosome.

Functionally, located at the top of the head of the 30S subunit, it contacts several helices of the 16S rRNA. In the 70S ribosome it contacts the 23S rRNA (bridge B1a) and protein L5 of the 50S subunit (bridge B1b), connecting the 2 subunits; these bridges are implicated in subunit movement. Contacts the tRNAs in the A and P-sites. This chain is Small ribosomal subunit protein uS13 (rpsM), found in Lactococcus lactis subsp. cremoris (Streptococcus cremoris).